Reading from the N-terminus, the 662-residue chain is ATP-dependent zinc metalloprotease FtsH (662 aa).

Over residues 1–15 (MSENPVKRPGKDGSR) the composition is skewed to basic and acidic residues. Residues 1-35 (MSENPVKRPGKDGSRNKFKPVQEEGGTPGWFRSKG) are disordered. Over 1–39 (MSENPVKRPGKDGSRNKFKPVQEEGGTPGWFRSKGESPQ) the chain is Cytoplasmic. The chain crosses the membrane as a helical span at residues 40 to 60 (GKFPGFLLFLMAGLLMLFVFL). Over 61–154 (RFFSGTDAPE…LKVEKGSSDL (94 aa)) the chain is Periplasmic. Residues 155–175 (NTFLALFAPWIIFAALYFFLF) traverse the membrane as a helical segment. Residues 176-662 (RRMSGQNGAQ…QGALPNPVTA (487 aa)) are Cytoplasmic-facing. Position 250-257 (250-257 (GPPGTGKT)) interacts with ATP. His-472 contacts Zn(2+). Glu-473 is an active-site residue. Positions 476 and 548 each coordinate Zn(2+).

The protein in the central section; belongs to the AAA ATPase family. In the C-terminal section; belongs to the peptidase M41 family. In terms of assembly, homohexamer. It depends on Zn(2+) as a cofactor.

The protein resides in the cell inner membrane. Its function is as follows. Acts as a processive, ATP-dependent zinc metallopeptidase for both cytoplasmic and membrane proteins. Plays a role in the quality control of integral membrane proteins. This chain is ATP-dependent zinc metalloprotease FtsH, found in Pelodictyon phaeoclathratiforme (strain DSM 5477 / BU-1).